The sequence spans 1001 residues: MPSTNRAGSLKDPEIAELFFKEDPEKLFTDLREIGHGSFGAVYFARDVRTNEVVAIKKMSYSGKQSTEKWQDIIKEVKFLQRIKHPNSIEYKGCYLREHTAWLVMEYCLGSASDLLEVHKKPLQEVEIAAITHGALQGLAYLHSHTMIHRDIKAGNILLTEPGQVKLADFGSASMASPANSFVGTPYWMAPEVILAMDEGQYDGKVDVWSLGITCIELAERKPPLFNMNAMSALYHIAQNESPTLQSNEWSDYFRNFVDSCLQKIPQDRPTSEELLKHIFVLRERPETVLIDLIQRTKDAVRELDNLQYRKMKKLLFQEAHNGPAVEAQEEEEEQDHGVGRTGTVNSVGSNQSIPSMSISASSQSSSVNSLPDVSDDKSELDMMEGDHTVMSNSSVIHLKPEEENYREEGDPRTRASDPQSPPQVSRHKSHYRNREHFATIRTASLVTRQMQEHEQDSELREQMSGYKRMRRQHQKQLMTLENKLKAEMDEHRLRLDKDLETQRNNFAAEMEKLIKKHQAAMEKEAKVMSNEEKKFQQHIQAQQKKELNSFLESQKREYKLRKEQLKEELNENQSTPKKEKQEWLSKQKENIQHFQAEEEANLLRRQRQYLELECRRFKRRMLLGRHNLEQDLVREELNKRQTQKDLEHAMLLRQHESMQELEFRHLNTIQKMRCELIRLQHQTELTNQLEYNKRRERELRRKHVMEVRQQPKSLKSKELQIKKQFQDTCKIQTRQYKALRNHLLETTPKSEHKAVLKRLKEEQTRKLAILAEQYDHSINEMLSTQALRLDEAQEAECQVLKMQLQQELELLNAYQSKIKMQAEAQHDRELRELEQRVSLRRALLEQKIEEEMLALQNERTERIRSLLERQAREIEAFDSESMRLGFSNMVLSNLSPEAFSHSYPGASGWSHNPTGGPGPHWGHPMGGPPQAWGHPMQGGPQPWGHPSGPMQGVPRGSSMGVRNSPQALRRTASGGRTEQGMSRSTSVTSQISNGSHMSYT.

Serine 9 carries the phosphoserine modification. Residues 28–281 form the Protein kinase domain; sequence FTDLREIGHG…SEELLKHIFV (254 aa). Residues 34-42 and lysine 57 contribute to the ATP site; that span reads IGHGSFGAV. The Proton acceptor role is filled by aspartate 151. The tract at residues 324–433 is disordered; the sequence is PAVEAQEEEE…QVSRHKSHYR (110 aa). The span at 350–373 shows a compositional bias: low complexity; that stretch reads SNQSIPSMSISASSQSSSVNSLPD. 2 stretches are compositionally biased toward basic and acidic residues: residues 375–388 and 399–416; these read SDDKSELDMMEGDH and LKPEEENYREEGDPRTRA. Phosphoserine occurs at positions 421 and 445. Residues 458–651 adopt a coiled-coil conformation; sequence SELREQMSGY…QTQKDLEHAM (194 aa). The segment at 567-587 is disordered; the sequence is KEELNENQSTPKKEKQEWLSK. Residues 577 to 587 show a composition bias toward basic and acidic residues; sequence PKKEKQEWLSK. Threonine 669 is modified (phosphothreonine). A coiled-coil region spans residues 754-877; the sequence is KAVLKRLKEE…LERQAREIEA (124 aa). The tract at residues 911-1001 is disordered; the sequence is SHNPTGGPGP…ISNGSHMSYT (91 aa). Position 965 is a phosphoserine (serine 965). Positions 975-1001 are enriched in polar residues; that stretch reads GGRTEQGMSRSTSVTSQISNGSHMSYT.

It belongs to the protein kinase superfamily. STE Ser/Thr protein kinase family. STE20 subfamily. In terms of assembly, self-associates. Interacts with MAP2K3. Interacts with SPRED1. Interacts with TESK1; the interaction inhibits TAOK1 kinase activity. Interacts with MAP3K7. Post-translationally, proteolytically processed by caspase-3 (CASP3). Autophosphorylated. Phosphorylated by ATM in response to DNA damage. Phosphorylated by LRRK2. Highly expressed in the testis, and to a lower extent also expressed in brain, placenta, colon and skeletal muscle.

It localises to the cytoplasm. The catalysed reaction is L-seryl-[protein] + ATP = O-phospho-L-seryl-[protein] + ADP + H(+). The enzyme catalyses L-threonyl-[protein] + ATP = O-phospho-L-threonyl-[protein] + ADP + H(+). Its activity is regulated as follows. Serine/threonine-protein kinase activity is inhibited by SPRED1. Its function is as follows. Serine/threonine-protein kinase involved in various processes such as p38/MAPK14 stress-activated MAPK cascade, DNA damage response and regulation of cytoskeleton stability. Phosphorylates MAP2K3, MAP2K6 and MARK2. Acts as an activator of the p38/MAPK14 stress-activated MAPK cascade by mediating phosphorylation and subsequent activation of the upstream MAP2K3 and MAP2K6 kinases. Involved in G-protein coupled receptor signaling to p38/MAPK14. In response to DNA damage, involved in the G2/M transition DNA damage checkpoint by activating the p38/MAPK14 stress-activated MAPK cascade, probably by mediating phosphorylation of MAP2K3 and MAP2K6. Acts as a regulator of cytoskeleton stability by phosphorylating 'Thr-208' of MARK2, leading to activate MARK2 kinase activity and subsequent phosphorylation and detachment of MAPT/TAU from microtubules. Also acts as a regulator of apoptosis: regulates apoptotic morphological changes, including cell contraction, membrane blebbing and apoptotic bodies formation via activation of the MAPK8/JNK cascade. Plays an essential role in the regulation of neuronal development in the central nervous system. Also plays a role in the regulation of neuronal migration to the cortical plate. In Homo sapiens (Human), this protein is Serine/threonine-protein kinase TAO1 (TAOK1).